Here is a 202-residue protein sequence, read N- to C-terminus: Small ribosomal subunit protein uS4 (202 aa).

One can recognise an S4 RNA-binding domain in the interval 93 to 155 (RRLDNVVRRV…ENLKNLYRGV (63 aa)).

Belongs to the universal ribosomal protein uS4 family. As to quaternary structure, part of the 30S ribosomal subunit. Contacts protein S5. The interaction surface between S4 and S5 is involved in control of translational fidelity.

Functionally, one of the primary rRNA binding proteins, it binds directly to 16S rRNA where it nucleates assembly of the body of the 30S subunit. In terms of biological role, with S5 and S12 plays an important role in translational accuracy. This chain is Small ribosomal subunit protein uS4, found in Rhodopirellula baltica (strain DSM 10527 / NCIMB 13988 / SH1).